An 89-amino-acid polypeptide reads, in one-letter code: Small ribosomal subunit protein uS15 (89 aa).

Belongs to the universal ribosomal protein uS15 family. Part of the 30S ribosomal subunit. Forms a bridge to the 50S subunit in the 70S ribosome, contacting the 23S rRNA.

In terms of biological role, one of the primary rRNA binding proteins, it binds directly to 16S rRNA where it helps nucleate assembly of the platform of the 30S subunit by binding and bridging several RNA helices of the 16S rRNA. Forms an intersubunit bridge (bridge B4) with the 23S rRNA of the 50S subunit in the ribosome. This Chlorobium chlorochromatii (strain CaD3) protein is Small ribosomal subunit protein uS15.